Here is a 98-residue protein sequence, read N- to C-terminus: Small ribosomal subunit protein bS6 (98 aa).

Belongs to the bacterial ribosomal protein bS6 family.

Its function is as follows. Binds together with bS18 to 16S ribosomal RNA. The protein is Small ribosomal subunit protein bS6 of Lactobacillus helveticus (strain DPC 4571).